The primary structure comprises 129 residues: Small ribosomal subunit protein uS9 (129 aa).

This sequence belongs to the universal ribosomal protein uS9 family.

In Gemmatimonas aurantiaca (strain DSM 14586 / JCM 11422 / NBRC 100505 / T-27), this protein is Small ribosomal subunit protein uS9.